The sequence spans 314 residues: Olfactory receptor 10T2 (314 aa).

Residues 1–26 (MRGFNKTTVVTQFILVGFSSLGELQL) are Extracellular-facing. N5 carries an N-linked (GlcNAc...) asparagine glycan. A helical transmembrane segment spans residues 27–47 (LLFVIFLLLYLTILVANVTIM). Over 48–55 (AVIRFSWT) the chain is Cytoplasmic. A helical transmembrane segment spans residues 56–76 (LHTPMYGFLFILSFSESCYTF). Residues 77-100 (VIIPQLLVHLLSDTKTISFMACAT) lie on the Extracellular side of the membrane. C98 and C190 are joined by a disulfide. The helical transmembrane segment at 101–121 (QLFFFLGFACTNCLLIAVMGY) threads the bilayer. The Cytoplasmic segment spans residues 122-140 (DRYVAICHPLRYTLIINKR). Residues 141–161 (LGLELISLSGATGFFIALVAT) traverse the membrane as a helical segment. At 162–198 (NLICDMRFCGPNRVNHYFCDMAPVIKLACTDTHVKEL) the chain is on the extracellular side. Residues 199 to 218 (ALFSLSILVIMVPFLLILIS) form a helical membrane-spanning segment. At 219–237 (YGFIVNTILKIPSAEGKKA) the chain is on the cytoplasmic side. Residues 238-258 (FVTCASHLTVVFVHYGCASII) form a helical membrane-spanning segment. Topologically, residues 259 to 271 (YLRPKSKSASDKD) are extracellular. Residues 272–292 (QLVAVTYTVVTPLLNPLVYSL) form a helical membrane-spanning segment. Residues 293–314 (RNKEVKTALKRVLGMPVATKMS) lie on the Cytoplasmic side of the membrane.

The protein belongs to the G-protein coupled receptor 1 family.

The protein localises to the cell membrane. In terms of biological role, odorant receptor. In Homo sapiens (Human), this protein is Olfactory receptor 10T2 (OR10T2).